Reading from the N-terminus, the 59-residue chain is Large ribosomal subunit protein bL32 (59 aa).

A compositionally biased stretch (basic residues) spans 1-22 (MAVPKKKTSNSKRDSRRAHWNR). Residues 1–59 (MAVPKKKTSNSKRDSRRAHWNRKANLAAQRALSTGKSILTGRAKGFEYPTKDDDEDDDE) are disordered.

This sequence belongs to the bacterial ribosomal protein bL32 family.

In Acaryochloris marina (strain MBIC 11017), this protein is Large ribosomal subunit protein bL32.